A 412-amino-acid polypeptide reads, in one-letter code: Mast cell carboxypeptidase A (412 aa).

The signal sequence occupies residues 1–10; sequence LMGVIYSTLA. The propeptide at 11 to 104 is activation peptide; sequence IAPVQFDREK…IDKQFDVKEE (94 aa). One can recognise a Peptidase M14 domain in the interval 113–407; it reads KYNDWNKIVS…LSVKFIAKYI (295 aa). 2 disulfides stabilise this stretch: C168–C181 and C240–C263. Zn(2+) is bound by residues H171 and E174. A Zn(2+)-binding site is contributed by H299. Catalysis depends on E373, which acts as the Proton donor/acceptor.

It belongs to the peptidase M14 family. It depends on Zn(2+) as a cofactor.

It localises to the cytoplasmic vesicle. Its subcellular location is the secretory vesicle. It carries out the reaction Release of a C-terminal amino acid, but little or no action with -Asp, -Glu, -Arg, -Lys or -Pro.. The chain is Mast cell carboxypeptidase A (Cpa3) from Rattus norvegicus (Rat).